A 798-amino-acid polypeptide reads, in one-letter code: MSFDPNLLHNNGHNGYPNGTSAALRETGVIEKLLTSYGFIQCSERQARLFFHCSQYNGNLQDLKVGDDVEFEVSSDRRTGKPIAIKLVKIKPEIHPEERMNGQVVCAVPHNLESKSPAAPGQSPTGSVCYERNGEVFYLTYTSEDVEGNVQLETGDKINFVIDNNKHTGAVSARNIMLLKKKQARYQGVVCAMKEAFGFIERGDVVKEIFFHYSEFKGDLETLQPGDDVEFTIKDRNGKEVATDVRLLPQGTVIFEDISIEHFEGTVTKVIPKVPSKNQNDPLPGRIKVDFVIPKELPFGDKDTKSKVTLLEGDHVRFNISTDRRDKLERATNIEVLSNTFQFTNEAREMGVIAAMRDGFGFIKCVDRDARMFFHFSEILDGNQLHIADEVEFTVVPDMLSAQRNHAIRIKKLPKGTVSFHSHSDHRFLGTVEKEATFSNPKTTSPNKGKDKEAEDGIIAYDDCGVKLTIAFQAKDVEGSTSPQIGDKVEFSISDKQRPGQQIATCVRLLGRNSNSKRLLGYVATLKDNFGFIETANHDKEIFFHYSEFSGDVDSLELGDMVEYSLSKGKGNKVSAEKVNKTHSVNGITEEANPTIYSGKVIRPLRGVDPTQIEYQGMIEIVEEGDMKGEVYPFGIVGMANKGDCLQKGESVKFQLCVLGQNAQTMAYNITPLRRATVECVKDQFGFINYEVGDSKKLFFHVKEVQDGIELQAGDEVEFSVILNQRTGKCSACNVWRVCEGPKAVAAPRPDRLVNRLKNITLDDASAPRLMVLRQPRGPDNSMGFGAERKIRQAGVID.

A CSD 1 domain is found at 26 to 87 (ETGVIEKLLT…RTGKPIAIKL (62 aa)). The residue at position 81 (Lys-81) is an N6-acetyllysine. Lys-91 is covalently cross-linked (Glycyl lysine isopeptide (Lys-Gly) (interchain with G-Cter in SUMO2)). Ser-123 is subject to Phosphoserine. Residues 136–179 (VFYLTYTSEDVEGNVQLETGDKINFVIDNNKHTGAVSARNIMLL) enclose the CSD 2; truncated domain. The CSD 3 domain occupies 186–245 (YQGVVCAMKEAFGFIERGDVVKEIFFHYSEFKGDLETLQPGDDVEFTIKDRNGKEVATDV). Phosphoserine is present on Ser-276. In terms of domain architecture, CSD 4; truncated spans 297 to 337 (LPFGDKDTKSKVTLLEGDHVRFNISTDRRDKLERATNIEVL). 2 CSD domains span residues 349–410 (EMGV…AIRI) and 447–507 (NKGK…ATCV). Residue Ser-514 is modified to Phosphoserine. The CSD 7 domain maps to 519–579 (LLGYVATLKD…KGNKVSAEKV (61 aa)). Ser-584 carries the post-translational modification Phosphoserine. 2 CSD domains span residues 610–670 (PTQI…AYNI) and 674–735 (RRAT…ACNV). One can recognise an SUZ-C domain in the interval 748 to 789 (PRPDRLVNRLKNITLDDASAPRLMVLRQPRGPDNSMGFGAER). Thr-761 carries the post-translational modification Phosphothreonine.

The protein belongs to the UNR family. Component of a multi subunit autoregulatory ribonucleoprotein complex (ARC), at least composed of IGF2BP1, PABPC1 and CSDE1. Interacts with STRAP. Part of a complex associated with the FOS mCRD domain and consisting of PABPC1, PAIP1, HNRPD and SYNCRIP. The interaction with PABPC1 is direct and RNA-independent. Interacts with EIF4ENIF1/4E-T.

It is found in the cytoplasm. It localises to the stress granule. The protein localises to the P-body. Its function is as follows. RNA-binding protein involved in translationally coupled mRNA turnover. Implicated with other RNA-binding proteins in the cytoplasmic deadenylation/translational and decay interplay of the FOS mRNA mediated by the major coding-region determinant of instability (mCRD) domain. Required for efficient formation of stress granules. The sequence is that of Cold shock domain-containing protein E1 from Rattus norvegicus (Rat).